The chain runs to 293 residues: tRNA pseudouridine synthase A (293 aa).

D60 functions as the Nucleophile in the catalytic mechanism. Y118 provides a ligand contact to substrate.

It belongs to the tRNA pseudouridine synthase TruA family. Homodimer.

It catalyses the reaction uridine(38/39/40) in tRNA = pseudouridine(38/39/40) in tRNA. Functionally, formation of pseudouridine at positions 38, 39 and 40 in the anticodon stem and loop of transfer RNAs. This Rippkaea orientalis (strain PCC 8801 / RF-1) (Cyanothece sp. (strain PCC 8801)) protein is tRNA pseudouridine synthase A.